The chain runs to 260 residues: Hydroxyethylthiazole kinase 1 (260 aa).

Met39 serves as a coordination point for substrate. ATP contacts are provided by Arg115 and Thr160. Gly187 is a binding site for substrate.

The protein belongs to the Thz kinase family. The cofactor is Mg(2+).

The catalysed reaction is 5-(2-hydroxyethyl)-4-methylthiazole + ATP = 4-methyl-5-(2-phosphooxyethyl)-thiazole + ADP + H(+). The protein operates within cofactor biosynthesis; thiamine diphosphate biosynthesis; 4-methyl-5-(2-phosphoethyl)-thiazole from 5-(2-hydroxyethyl)-4-methylthiazole: step 1/1. Functionally, catalyzes the phosphorylation of the hydroxyl group of 4-methyl-5-beta-hydroxyethylthiazole (THZ). The chain is Hydroxyethylthiazole kinase 1 from Streptococcus pneumoniae serotype 4 (strain ATCC BAA-334 / TIGR4).